The chain runs to 268 residues: Nickel import ATP-binding protein NikE (268 aa).

The ABC transporter domain maps to 4–252 (LNVSDLSHHY…SSDAGRVLQN (249 aa)). 45–52 (GRSGCGKS) lines the ATP pocket.

This sequence belongs to the ABC transporter superfamily. Nickel importer (TC 3.A.1.5.3) family. In terms of assembly, the complex is composed of two ATP-binding proteins (NikD and NikE), two transmembrane proteins (NikB and NikC) and a solute-binding protein (NikA).

The protein resides in the cell inner membrane. It carries out the reaction Ni(2+)(out) + ATP + H2O = Ni(2+)(in) + ADP + phosphate + H(+). Functionally, part of the ABC transporter complex NikABCDE involved in nickel import. Responsible for energy coupling to the transport system. In Escherichia coli O6:K15:H31 (strain 536 / UPEC), this protein is Nickel import ATP-binding protein NikE.